The following is a 195-amino-acid chain: Thymidylate kinase (195 aa).

7-14 (GIDGVGKS) provides a ligand contact to ATP.

This sequence belongs to the thymidylate kinase family.

It carries out the reaction dTMP + ATP = dTDP + ADP. Functionally, phosphorylation of dTMP to form dTDP in both de novo and salvage pathways of dTTP synthesis. This chain is Thymidylate kinase, found in Campylobacter concisus (strain 13826).